Here is a 193-residue protein sequence, read N- to C-terminus: Ion-translocating oxidoreductase complex subunit A (193 aa).

6 helical membrane-spanning segments follow: residues L5–L25, I39–I59, F62–A82, V102–L122, V134–L154, and A170–L190.

This sequence belongs to the NqrDE/RnfAE family. The complex is composed of six subunits: RnfA, RnfB, RnfC, RnfD, RnfE and RnfG.

Its subcellular location is the cell inner membrane. In terms of biological role, part of a membrane-bound complex that couples electron transfer with translocation of ions across the membrane. This Azoarcus sp. (strain BH72) protein is Ion-translocating oxidoreductase complex subunit A.